The chain runs to 588 residues: Retrograde regulation protein 2 (588 aa).

It belongs to the GppA/Ppx family.

Its function is as follows. Required for a novel path of interorganelle communication between mitochondria, peroxisomes and the nucleus, thereby maintaining a functional metabolic interaction between the tricarboxylic acid and glyoxylate cycles. In particular, required for the retrograde expression of the peroxisomal isoform of citrate synthase, CIT2. This chain is Retrograde regulation protein 2 (RTG2), found in Saccharomyces cerevisiae (strain ATCC 204508 / S288c) (Baker's yeast).